The following is a 119-amino-acid chain: uncharacterized protein (119 aa).

This is an uncharacterized protein from Methanocaldococcus jannaschii (strain ATCC 43067 / DSM 2661 / JAL-1 / JCM 10045 / NBRC 100440) (Methanococcus jannaschii).